A 645-amino-acid chain; its full sequence is Protein FAM47B (645 aa).

Composition is skewed to basic and acidic residues over residues 1–11, 238–251, and 288–299; these read MGDRRPQDRPR, EPPE…RVDP, and PETRVSHLHPEP. Disordered regions lie at residues 1–23 and 168–321; these read MGDR…WYCD and AREK…SLCP.

Belongs to the FAM47 family.

The sequence is that of Protein FAM47B (FAM47B) from Homo sapiens (Human).